The chain runs to 273 residues: Large ribosomal subunit protein uL2cz/uL2cy (273 aa).

2 disordered regions span residues 1 to 20 (MAIH…AVDS) and 224 to 254 (NPVD…PALG).

It belongs to the universal ribosomal protein uL2 family. In terms of assembly, part of the 50S ribosomal subunit.

The protein localises to the plastid. The protein resides in the chloroplast. This is Large ribosomal subunit protein uL2cz/uL2cy (rpl2-A) from Nuphar advena (Common spatterdock).